We begin with the raw amino-acid sequence, 299 residues long: MLKIVSKPSFNRIALMGREGVEGVPETLAALKDYLVSLNREVILEENAAHMIDGSRLLTVPANDLKKKADLLIVVGGDGSLLNAAHIAVPQQLPVLGINRGRLGFLTDIPPNELTQISDILDGHYREEVRFLLEGTVEEGDEIVAQGIALNDIVLLPGNAPKMIEFDIFINDEFVCNQRADGLIITTPTGSTAYALSGGGPILHPQLNAMALVPMFPHTLSSRPIVVDAESQIKITISPENDVSPYVSNDGQERVSIKPGGNVYTRKYHYPLHLIHPTDYNYYDTLRRKLDWEKRAAKV.

Residue Asp78 is the Proton acceptor of the active site. NAD(+)-binding positions include 78-79 (DG), 151-152 (ND), Lys162, Arg179, Asp181, 192-197 (TAYALS), and Gln252.

The protein belongs to the NAD kinase family. Requires a divalent metal cation as cofactor.

The protein localises to the cytoplasm. The catalysed reaction is NAD(+) + ATP = ADP + NADP(+) + H(+). In terms of biological role, involved in the regulation of the intracellular balance of NAD and NADP, and is a key enzyme in the biosynthesis of NADP. Catalyzes specifically the phosphorylation on 2'-hydroxyl of the adenosine moiety of NAD to yield NADP. This chain is NAD kinase, found in Coxiella burnetii (strain CbuG_Q212) (Coxiella burnetii (strain Q212)).